We begin with the raw amino-acid sequence, 206 residues long: Outer-membrane lipoprotein carrier protein (206 aa).

An N-terminal signal peptide occupies residues methionine 1–alanine 20.

It belongs to the LolA family. As to quaternary structure, monomer.

It localises to the periplasm. Its function is as follows. Participates in the translocation of lipoproteins from the inner membrane to the outer membrane. Only forms a complex with a lipoprotein if the residue after the N-terminal Cys is not an aspartate (The Asp acts as a targeting signal to indicate that the lipoprotein should stay in the inner membrane). The polypeptide is Outer-membrane lipoprotein carrier protein (Wigglesworthia glossinidia brevipalpis).